The primary structure comprises 366 residues: DNA integrity scanning protein DisA (366 aa).

In terms of domain architecture, DAC spans 21–159 (VHTLKGTLQR…EGKAHMLEQP (139 aa)). Residues Gly-88, Leu-106, and 119–123 (TRHRS) contribute to the ATP site.

The protein belongs to the DisA family. Homooctamer. It depends on Mg(2+) as a cofactor.

It carries out the reaction 2 ATP = 3',3'-c-di-AMP + 2 diphosphate. In terms of biological role, participates in a DNA-damage check-point. DisA forms globular foci that rapidly scan along the chromosomes searching for lesions. Functionally, also has diadenylate cyclase activity, catalyzing the condensation of 2 ATP molecules into cyclic di-AMP (c-di-AMP). c-di-AMP likely acts as a signaling molecule that may couple DNA integrity with a cellular process. In Corynebacterium glutamicum (strain R), this protein is DNA integrity scanning protein DisA.